Consider the following 649-residue polypeptide: MGKIRKLDEQLSNLIAAGEVVERPASVVKELVENSIDANSTSIEIHLEEAGLSKIRIIDNGDGIAEEDCIVAFERHATSKIKDENDLFRIRTLGFRGEALPSIASVSELELVTSTGDAPGTHLIIKGGEIIKQEKTASRKGTDITVQNLFFNTPARLKYMKTIHTELGNITDIVYRIAMSHPEVSLKLFHNTKKLLHTSGNGDVRQVLAAIYSIQVAKKLIPIEAESLDFTIRGYVTLPEVTRASRNYMSTIVNGRYVRNYVLMKAIQQGYHTLLPVGRYPIGFLSIEMDPMLVDVNVHPAKLEVRFSKEQELLQFIEQTLQDAFKKVQLIPDAGVTTKKKTKDESVQEQFHFEHTKPKEPSMPNIVLPTGMDEAQEEESAEKPSVAPQLWQQPKQEWQPPQSLVREEESWQSTSKPLIEEKAAHNEQEWDHHEEEFELEELDELQNIEEIEMNGNDLPPLYPIGQMHGTYIFAQNDKGLYMIDQHAAQERINYEYFRDKVGQVTQEVQELLVPYRIDLSLNEFLRVEEQLEELKKVGLFLEQFGHQSFIVRSHPIWFPKGKETEIIDEMMQQVVKLKKVDIKKLREEAAIMMSCKASIKANQYLTNDQIFALLEELRTTSNPYTCPHGRPIIIHHSTYELEKMFKRVM.

The tract at residues 339 to 414 (KKKTKDESVQ…VREEESWQST (76 aa)) is disordered. A compositionally biased stretch (basic and acidic residues) spans 342–360 (TKDESVQEQFHFEHTKPKE). Over residues 388-402 (PQLWQQPKQEWQPPQ) the composition is skewed to low complexity.

Belongs to the DNA mismatch repair MutL/HexB family.

This protein is involved in the repair of mismatches in DNA. It is required for dam-dependent methyl-directed DNA mismatch repair. May act as a 'molecular matchmaker', a protein that promotes the formation of a stable complex between two or more DNA-binding proteins in an ATP-dependent manner without itself being part of a final effector complex. This chain is DNA mismatch repair protein MutL, found in Bacillus cytotoxicus (strain DSM 22905 / CIP 110041 / 391-98 / NVH 391-98).